The sequence spans 246 residues: Octanoyltransferase (246 aa).

In terms of domain architecture, BPL/LPL catalytic spans 46-234 (GTAGEMVWLV…AFEEVFGAAE (189 aa)). Substrate is bound by residues 85 to 92 (RGGEYTYH), 165 to 167 (AIG), and 178 to 180 (GIA). Residue Cys-196 is the Acyl-thioester intermediate of the active site.

The protein belongs to the LipB family.

It localises to the cytoplasm. The catalysed reaction is octanoyl-[ACP] + L-lysyl-[protein] = N(6)-octanoyl-L-lysyl-[protein] + holo-[ACP] + H(+). It participates in protein modification; protein lipoylation via endogenous pathway; protein N(6)-(lipoyl)lysine from octanoyl-[acyl-carrier-protein]: step 1/2. Its function is as follows. Catalyzes the transfer of endogenously produced octanoic acid from octanoyl-acyl-carrier-protein onto the lipoyl domains of lipoate-dependent enzymes. Lipoyl-ACP can also act as a substrate although octanoyl-ACP is likely to be the physiological substrate. This Chelativorans sp. (strain BNC1) protein is Octanoyltransferase.